A 271-amino-acid chain; its full sequence is Dihydropteroate synthase type-2 (271 aa).

Residues 1 to 259 (MNKSLIIFGI…EPRPLRDGLA (259 aa)) enclose the Pterin-binding domain. Asn12 is a 4-aminobenzoate binding site. Residues Asn12, Phe18, Ser51, and Ser52 each coordinate diphosphate. Mg(2+) is bound at residue Asn12. The 7,8-dihydropteroate site is built by Ser52, Asp85, Asn104, Asp174, Phe179, Lys213, and Ser214. (7,8-dihydropterin-6-yl)methyl diphosphate contacts are provided by Asp85, Asn104, and Asp174. 6-hydroxymethyl-7,8-dihydropterin contacts are provided by Asn104 and Asp174. Lys213 contributes to the (7,8-dihydropterin-6-yl)methyl diphosphate binding site. Residue Lys213 coordinates 6-hydroxymethyl-7,8-dihydropterin. Residue Arg247 coordinates 4-aminobenzoate. Diphosphate is bound by residues Arg247 and His249. A (7,8-dihydropterin-6-yl)methyl diphosphate-binding site is contributed by 247 to 249 (RTH).

The protein belongs to the DHPS family. Homodimer. It depends on Mg(2+) as a cofactor.

The enzyme catalyses (7,8-dihydropterin-6-yl)methyl diphosphate + 4-aminobenzoate = 7,8-dihydropteroate + diphosphate. The protein operates within cofactor biosynthesis; tetrahydrofolate biosynthesis; 7,8-dihydrofolate from 2-amino-4-hydroxy-6-hydroxymethyl-7,8-dihydropteridine diphosphate and 4-aminobenzoate: step 1/2. Its function is as follows. Catalyzes the condensation of para-aminobenzoate (pABA) with 6-hydroxymethyl-7,8-dihydropterin diphosphate (DHPt-PP) to form 7,8-dihydropteroate (H2Pte), the immediate precursor of folate derivatives. Confers resistance to sulfonamide antibiotics, including sulfamethoxazole (SMX), sulfadiazine and sulfisoxazole. The type II enzyme is stable whereas type I DHPS loses its activity rapidly. This Escherichia coli protein is Dihydropteroate synthase type-2.